A 295-amino-acid chain; its full sequence is GTP cyclohydrolase FolE2 (295 aa).

The protein belongs to the GTP cyclohydrolase IV family.

It catalyses the reaction GTP + H2O = 7,8-dihydroneopterin 3'-triphosphate + formate + H(+). It participates in cofactor biosynthesis; 7,8-dihydroneopterin triphosphate biosynthesis; 7,8-dihydroneopterin triphosphate from GTP: step 1/1. Its function is as follows. Converts GTP to 7,8-dihydroneopterin triphosphate. The protein is GTP cyclohydrolase FolE2 of Pseudomonas putida (strain W619).